We begin with the raw amino-acid sequence, 275 residues long: Phosphatidylglycerol--prolipoprotein diacylglyceryl transferase (275 aa).

A run of 4 helical transmembrane segments spans residues 20–40 (FTIHWYGVIIASGVVLALLLA), 58–78 (LLWALPIAIICARIYYVVFQW), 88–108 (IIAIWDGGIAIYGAILGGFIV), and 118–138 (LSSWLMMDIIAPTLIMAQGIG). An a 1,2-diacyl-sn-glycero-3-phospho-(1'-sn-glycerol)-binding site is contributed by Arg-139. 2 helical membrane passes run 209–229 (GEIFLTYVMWYAFGRFFIEGM) and 239–259 (IRISQLLSIVFFVSALIILII).

Belongs to the Lgt family.

The protein localises to the cell membrane. The catalysed reaction is L-cysteinyl-[prolipoprotein] + a 1,2-diacyl-sn-glycero-3-phospho-(1'-sn-glycerol) = an S-1,2-diacyl-sn-glyceryl-L-cysteinyl-[prolipoprotein] + sn-glycerol 1-phosphate + H(+). Its pathway is protein modification; lipoprotein biosynthesis (diacylglyceryl transfer). In terms of biological role, catalyzes the transfer of the diacylglyceryl group from phosphatidylglycerol to the sulfhydryl group of the N-terminal cysteine of a prolipoprotein, the first step in the formation of mature lipoproteins. The sequence is that of Phosphatidylglycerol--prolipoprotein diacylglyceryl transferase from Limosilactobacillus reuteri (strain DSM 20016) (Lactobacillus reuteri).